The chain runs to 130 residues: UPF0251 protein MmarC5_0986 (130 aa).

It belongs to the UPF0251 family.

This is UPF0251 protein MmarC5_0986 from Methanococcus maripaludis (strain C5 / ATCC BAA-1333).